The chain runs to 247 residues: tRNA (guanine-N(7)-)-methyltransferase (247 aa).

S-adenosyl-L-methionine is bound by residues Gly-70, 93-94, 128-129, and Leu-148; these read EI and NA. Asp-151 is an active-site residue. Residue 226 to 228 coordinates S-adenosyl-L-methionine; that stretch reads SEE.

This sequence belongs to the class I-like SAM-binding methyltransferase superfamily. TrmB family.

The protein resides in the nucleus. It carries out the reaction guanosine(46) in tRNA + S-adenosyl-L-methionine = N(7)-methylguanosine(46) in tRNA + S-adenosyl-L-homocysteine. It functions in the pathway tRNA modification; N(7)-methylguanine-tRNA biosynthesis. In terms of biological role, catalyzes the formation of N(7)-methylguanine at position 46 (m7G46) in tRNA. This chain is tRNA (guanine-N(7)-)-methyltransferase, found in Drosophila virilis (Fruit fly).